Consider the following 165-residue polypeptide: Choriogonadotropin subunit beta 3 (165 aa).

The signal sequence occupies residues 1–20 (MEMFQGLLLLLLLSMGGTWA). Disulfide bonds link Cys-29–Cys-77, Cys-43–Cys-92, Cys-46–Cys-130, Cys-54–Cys-108, Cys-58–Cys-110, and Cys-113–Cys-120. N-linked (GlcNAc...) asparagine glycosylation is found at Asn-33 and Asn-50. A disordered region spans residues 131–165 (DDPRFQDSSSSKAPPPSLPSPSRLPGPSDTPILPQ). O-linked (GalNAc...) serine glycans are attached at residues Ser-141, Ser-147, Ser-152, and Ser-158. The span at 143 to 154 (APPPSLPSPSRL) shows a compositional bias: pro residues.

It belongs to the glycoprotein hormones subunit beta family. In terms of assembly, heterodimer of a common alpha chain identical in LH, FSH, TSH and HCG and a unique beta chain distinct in each of the hormones. High expression in the placenta throughout pregnancy.

Its subcellular location is the secreted. In terms of biological role, beta subunit of the human chorionic gonadotropin (hCG). hCG is a complex glycoprotein composed of two glycosylated subunits alpha and beta which are non-covalently associated. The alpha subunit is identical to those in the pituitary gonadotropin hormones (LH, FSH and TSH). The beta subunits are distinct in each of the hormones and confer receptor and biological specificity. Has an essential role in pregnancy and maternal adaptation. Stimulates the ovaries to synthesize the steroids that are essential for the maintenance of pregnancy. The sequence is that of Choriogonadotropin subunit beta 3 (CGB3) from Homo sapiens (Human).